We begin with the raw amino-acid sequence, 170 residues long: Photosystem I assembly protein Ycf3 (170 aa).

TPR repeat units lie at residues 35-69 (AFTY…EIDP), 73-106 (SYIL…NPSL), and 121-154 (GEQA…APGN).

It belongs to the Ycf3 family.

It localises to the plastid. Its subcellular location is the chloroplast thylakoid membrane. In terms of biological role, essential for the assembly of the photosystem I (PSI) complex. May act as a chaperone-like factor to guide the assembly of the PSI subunits. This is Photosystem I assembly protein Ycf3 from Cycas taitungensis (Prince sago).